The following is a 139-amino-acid chain: Hydrogenase maturation factor HypA (139 aa).

Residue His-2 participates in Ni(2+) binding. Zn(2+) contacts are provided by Cys-73, Cys-76, Cys-110, and Cys-113.

Belongs to the HypA/HybF family.

Involved in the maturation of [NiFe] hydrogenases. Required for nickel insertion into the metal center of the hydrogenase. This Thermococcus onnurineus (strain NA1) protein is Hydrogenase maturation factor HypA.